Reading from the N-terminus, the 30-residue chain is Cyclotide cter-Q (30 aa).

A cross-link (cyclopeptide (Gly-Asn)) is located at residues 1 to 30; it reads GIPCGESCVFIPCISTVIGCSCKNKVCYRN. Intrachain disulfides connect Cys-4–Cys-20, Cys-8–Cys-22, and Cys-13–Cys-27.

This is a cyclic peptide.

The protein resides in the secreted. Probably participates in a plant defense mechanism. The protein is Cyclotide cter-Q of Clitoria ternatea (Butterfly pea).